A 1960-amino-acid chain; its full sequence is Nuclear pore complex protein Nup98-Nup96 (1960 aa).

Tandem repeats lie at residues 2–3, 9–10, 18–19, 30–31, 35–36, 43–44, 59–60, 73–74, 81–82, 92–93, 105–106, 117–118, 125–126, 135–136, 148–149, 160–161, 163–164, 174–175, 264–265, 266–267, 282–283, 293–294, 304–305, 309–310, 319–320, 333–334, 352–353, 358–359, 365–366, 377–378, 384–385, 387–388, 400–401, 413–414, 426–427, 428–429, 441–442, 454–455, 467–468, 493–494, 496–497, 516–517, 527–528, 546–547, 553–554, and 565–566. A 46 X 2 AA repeats of F-G region spans residues 2–566; it reads FGGAKPSFGA…GGSLGGGGFG (565 aa). Disordered stretches follow at residues 698-768 and 781-860; these read KSVE…WLHP and TGMD…AANQ. Over residues 704–718 the composition is skewed to polar residues; it reads NPSSSIGSAPNTPQS. Residues 755 to 768 are compositionally biased toward basic and acidic residues; the sequence is ESQDNGRRESWLHP. Polar residues-rich tracts occupy residues 781–794 and 806–850; these read TGMD…STLN and RPSS…SNRS. The Peptidase S59 domain occupies 886-1028; that stretch reads RVGYYTIPSL…GSWVFRVKHF (143 aa). The active-site Nucleophile is Ser-1029.

The protein belongs to the nucleoporin GLFG family. In terms of assembly, part of the nuclear pore complex (NPC). Interacts with Rae1. Nuclear pore complex protein Nup98: Interacts with pzg and Chro. Interacts with MBD-R2; the interaction allows Nup98 recruitment to chromatin. Interacts with Trx. Interacts with Wds. Interacts with Mgtor and Cp190. Upon ecdysone stimulation, interacts with EcR, CTCF, su(Hw) and Trl. In terms of processing, isoform A and isoform C are autoproteolytically cleaved to yield Nup98 and Nup96 or Nup98 only, respectively. As to expression, expressed in brain.

The protein resides in the chromosome. It localises to the nucleus. Its subcellular location is the nucleoplasm. The protein localises to the nucleus membrane. It is found in the nuclear pore complex. Its function is as follows. Part of the nuclear pore complex (NPC). Required for MAD import as part of the Nup107-160 complex and required for nuclear export of Moe probably via its association with Rae1. Plays a role in nuclear mRNA export. Promotes cell antiviral response by up-regulating FoxK-dependent antiviral gene transcription. In germline stem cells, involved in their maintenance and division together with the TGF-Beta and EGFR signaling pathways. In larval lymph glands, has a role in the maintenance of hematopoiesis by regulating Pvr expression. In terms of biological role, part of the nuclear pore complex (NPC). In the nucleoplasm, binds to transcriptionally active chromatin with a preference for regulatory regions; co-localizes with RNA polymerase II in a RNA-independent manner and before transition into transcription elongation. Plays a role in the transcriptional memory process by stabilizing enhancer-promoter loops and by mediating anchoring of chromatin to the nuclear pore complex region. During larval development, interacts with trx and MBD-R2 and regulates transcription of developmental genes including ecdysone-responsive genes such as Eip74 and E23. Functionally, part of the nuclear pore complex (NPC). In Drosophila melanogaster (Fruit fly), this protein is Nuclear pore complex protein Nup98-Nup96.